The sequence spans 271 residues: Putative pyruvate, phosphate dikinase regulatory protein (271 aa).

Residue 150–157 (GVSRTSKT) coordinates ADP.

It belongs to the pyruvate, phosphate/water dikinase regulatory protein family. PDRP subfamily.

It carries out the reaction N(tele)-phospho-L-histidyl/L-threonyl-[pyruvate, phosphate dikinase] + ADP = N(tele)-phospho-L-histidyl/O-phospho-L-threonyl-[pyruvate, phosphate dikinase] + AMP + H(+). It catalyses the reaction N(tele)-phospho-L-histidyl/O-phospho-L-threonyl-[pyruvate, phosphate dikinase] + phosphate + H(+) = N(tele)-phospho-L-histidyl/L-threonyl-[pyruvate, phosphate dikinase] + diphosphate. In terms of biological role, bifunctional serine/threonine kinase and phosphorylase involved in the regulation of the pyruvate, phosphate dikinase (PPDK) by catalyzing its phosphorylation/dephosphorylation. The chain is Putative pyruvate, phosphate dikinase regulatory protein from Oceanobacillus iheyensis (strain DSM 14371 / CIP 107618 / JCM 11309 / KCTC 3954 / HTE831).